We begin with the raw amino-acid sequence, 1001 residues long: Sarcoplasmic/endoplasmic reticulum calcium ATPase 1 (1001 aa).

Helical transmembrane passes span 49-69 (LWELVIEQFEDLLVRILLLAA), 90-110 (EPFVILLILIANAIVGVWQER), 254-273 (DEFGEQLSKVISLICVAVWL), and 296-313 (FKIAVALAVAAIPEGLPA). Residues valine 304, alanine 305, isoleucine 307, and glutamate 309 each coordinate Ca(2+). Aspartate 351 functions as the 4-aspartylphosphate intermediate in the catalytic mechanism. Residues aspartate 351 and threonine 353 each coordinate Mg(2+). Threonine 353 contacts ATP. Position 441 is a phosphothreonine (threonine 441). ATP is bound by residues glutamate 442, arginine 489, lysine 515, and arginine 560. The residue at position 569 (threonine 569) is a Phosphothreonine. The residue at position 581 (serine 581) is a Phosphoserine. The ATP site is built by threonine 625, glycine 626, aspartate 627, arginine 678, and lysine 684. Position 703 (aspartate 703) interacts with Mg(2+). Asparagine 706 is an ATP binding site. The next 3 membrane-spanning stretches (helical) occupy residues 758–777 (KQFIRYLISSNVGEVVCIFL), 788–808 (IPVQLLWVNLVTDGLPATALG), and 829–851 (ISGWLFFRYMAIGGYVGAATVGA). Residues asparagine 768, glutamate 771, asparagine 796, threonine 799, and aspartate 800 each contribute to the Ca(2+) site. The segment at 788–808 (IPVQLLWVNLVTDGLPATALG) is interaction with PLN. A disulfide bridge links cysteine 876 with cysteine 888. 3 consecutive transmembrane segments (helical) span residues 898-917 (TMALSVLVTIEMCNALNSLS), 931-949 (IWLLGSICLSMSLHFLILY), and 965-985 (TQWLMVLKISLPVIGLDEILK). Glutamate 908 provides a ligand contact to Ca(2+). Residues 932–943 (WLLGSICLSMSL) are interaction with PLN.

The protein belongs to the cation transport ATPase (P-type) (TC 3.A.3) family. Type IIA subfamily. Interacts with sarcolipin (SLN). Interacts with phospholamban (PLN). Interacts with myoregulin (MRLN). Interacts with DWORF. Interacts with VMP1. The cofactor is Mg(2+). Skeletal muscle, fast twitch muscle (type II) fibers.

It is found in the endoplasmic reticulum membrane. The protein resides in the sarcoplasmic reticulum membrane. The enzyme catalyses Ca(2+)(in) + ATP + H2O = Ca(2+)(out) + ADP + phosphate + H(+). Inhibited by sarcolipin (SLN) and myoregulin (MRLN). Has also been shown to be reversibly inhibited by phospholamban (PLN) at low calcium concentrations in vitro. Dephosphorylated PLN decreases the apparent affinity of the ATPase for calcium and this inhibition is regulated by the phosphorylation of PLN in vitro. Enhanced by DWORF; DWORF increases activity by displacing sarcolipin (SLN), phospholamban (PLN) and myoregulin (MRLN). Functionally, key regulator of striated muscle performance by acting as the major Ca(2+) ATPase responsible for the reuptake of cytosolic Ca(2+) into the sarcoplasmic reticulum. Catalyzes the hydrolysis of ATP coupled with the translocation of calcium from the cytosol to the sarcoplasmic reticulum lumen. Contributes to calcium sequestration involved in muscular excitation/contraction. This chain is Sarcoplasmic/endoplasmic reticulum calcium ATPase 1, found in Homo sapiens (Human).